We begin with the raw amino-acid sequence, 159 residues long: SsrA-binding protein (159 aa).

Residues 138–159 (KRDTLKDKDWQRQKERMMKHSV) form a disordered region.

The protein belongs to the SmpB family.

It localises to the cytoplasm. Functionally, required for rescue of stalled ribosomes mediated by trans-translation. Binds to transfer-messenger RNA (tmRNA), required for stable association of tmRNA with ribosomes. tmRNA and SmpB together mimic tRNA shape, replacing the anticodon stem-loop with SmpB. tmRNA is encoded by the ssrA gene; the 2 termini fold to resemble tRNA(Ala) and it encodes a 'tag peptide', a short internal open reading frame. During trans-translation Ala-aminoacylated tmRNA acts like a tRNA, entering the A-site of stalled ribosomes, displacing the stalled mRNA. The ribosome then switches to translate the ORF on the tmRNA; the nascent peptide is terminated with the 'tag peptide' encoded by the tmRNA and targeted for degradation. The ribosome is freed to recommence translation, which seems to be the essential function of trans-translation. The polypeptide is SsrA-binding protein (Alteromonas mediterranea (strain DSM 17117 / CIP 110805 / LMG 28347 / Deep ecotype)).